Here is a 257-residue protein sequence, read N- to C-terminus: Tryptophan synthase alpha chain (257 aa).

Catalysis depends on proton acceptor residues Glu-44 and Asp-55.

The protein belongs to the TrpA family. Tetramer of two alpha and two beta chains.

It catalyses the reaction (1S,2R)-1-C-(indol-3-yl)glycerol 3-phosphate + L-serine = D-glyceraldehyde 3-phosphate + L-tryptophan + H2O. Its pathway is amino-acid biosynthesis; L-tryptophan biosynthesis; L-tryptophan from chorismate: step 5/5. The alpha subunit is responsible for the aldol cleavage of indoleglycerol phosphate to indole and glyceraldehyde 3-phosphate. This is Tryptophan synthase alpha chain from Chlamydia felis (strain Fe/C-56) (Chlamydophila felis).